Consider the following 394-residue polypeptide: NAD(P)H-quinone oxidoreductase subunit H (394 aa).

Belongs to the complex I 49 kDa subunit family. NDH-1 can be composed of about 15 different subunits; different subcomplexes with different compositions have been identified which probably have different functions.

Its subcellular location is the cellular thylakoid membrane. The catalysed reaction is a plastoquinone + NADH + (n+1) H(+)(in) = a plastoquinol + NAD(+) + n H(+)(out). It catalyses the reaction a plastoquinone + NADPH + (n+1) H(+)(in) = a plastoquinol + NADP(+) + n H(+)(out). NDH-1 shuttles electrons from an unknown electron donor, via FMN and iron-sulfur (Fe-S) centers, to quinones in the respiratory and/or the photosynthetic chain. The immediate electron acceptor for the enzyme in this species is believed to be plastoquinone. Couples the redox reaction to proton translocation, and thus conserves the redox energy in a proton gradient. Cyanobacterial NDH-1 also plays a role in inorganic carbon-concentration. The polypeptide is NAD(P)H-quinone oxidoreductase subunit H (Synechococcus sp. (strain CC9605)).